Reading from the N-terminus, the 553-residue chain is 3-amino-2-hydroxy-4-methoxybenzoate diazotase (553 aa).

The span at Ala-157–Ala-167 shows a compositional bias: low complexity. Residues Ala-157–Val-178 are disordered.

Belongs to the ATP-dependent AMP-binding enzyme family.

The catalysed reaction is 3-amino-2-hydroxy-4-methoxybenzoate + nitrite + ATP = cremeomycin + AMP + diphosphate + H2O. Its pathway is antibiotic biosynthesis. Functionally, part of a gene cluster involved in the biosynthesis of cremeomycin, a light-sensitive o-diazoquinone with antibacterial and antiproliferative effects. Catalyzes the last step of cremeomycin biosynthesis, the diazotization of 3-amino-2-hydroxy-4-methoxybenzoate (3,2,4-AHMBA) with nitrite to generate cremeomycin. The polypeptide is 3-amino-2-hydroxy-4-methoxybenzoate diazotase (Streptomyces cremeus).